Consider the following 89-residue polypeptide: Putative regulatory protein CYB_0055 (89 aa).

This sequence belongs to the RemA family.

This is Putative regulatory protein CYB_0055 from Synechococcus sp. (strain JA-2-3B'a(2-13)) (Cyanobacteria bacterium Yellowstone B-Prime).